The sequence spans 284 residues: RNase adapter protein RapZ (284 aa).

An ATP-binding site is contributed by 8–15 (GRSGSGKS). Residue 56-59 (DVRN) coordinates GTP. The interval 266 to 284 (RSRGKNVQSRHRTLEKRKT) is RNA-binding.

This sequence belongs to the RapZ-like family. RapZ subfamily. Homotrimer.

Modulates the synthesis of GlmS, by affecting the processing and stability of the regulatory small RNA GlmZ. When glucosamine-6-phosphate (GlcN6P) concentrations are high in the cell, RapZ binds GlmZ and targets it to cleavage by RNase E. Consequently, GlmZ is inactivated and unable to activate GlmS synthesis. Under low GlcN6P concentrations, RapZ is sequestered and inactivated by an other regulatory small RNA, GlmY, preventing GlmZ degradation and leading to synthesis of GlmS. The chain is RNase adapter protein RapZ from Salmonella typhi.